A 390-amino-acid chain; its full sequence is Pyruvate dehydrogenase E1 component subunit alpha, somatic form, mitochondrial (390 aa).

A mitochondrion-targeting transit peptide spans Met1–Asn29. Lys63 carries the post-translational modification N6-acetyllysine; alternate. Position 63 is an N6-succinyllysine; alternate (Lys63). The pyruvate site is built by His92, Tyr118, Arg119, Ala157, Gly165, Val167, Asp196, Gly197, Ala198, Asn225, and Tyr227. Tyr118 and Arg119 together coordinate thiamine diphosphate. Residues Gly165, Val167, Asp196, Gly197, Ala198, and Asn225 each coordinate thiamine diphosphate. Asp196 serves as a coordination point for Mg(2+). Mg(2+) is bound by residues Asn225 and Tyr227. At Ser232 the chain carries Phosphoserine; by PDK1. N6-acetyllysine; alternate is present on Lys244. At Lys244 the chain carries N6-succinyllysine; alternate. Residue Lys277 is modified to N6-succinyllysine. His292 serves as a coordination point for thiamine diphosphate. Residue Ser293 is modified to Phosphoserine; by PDK1, PDK2, PDK3 and PDK4. Ser295 is subject to Phosphoserine. Ser300 carries the post-translational modification Phosphoserine; by PDK1, PDK2, PDK3 and PDK4. Tyr301 bears the Phosphotyrosine mark. The residue at position 313 (Lys313) is an N6-acetyllysine; alternate. Lys313 bears the N6-succinyllysine; alternate mark. Residues Lys321 and Lys336 each carry the N6-acetyllysine modification. Lys385 carries the post-translational modification N6-succinyllysine.

In terms of assembly, heterotetramer of two PDHA1 and two PDHB subunits. The heterotetramer interacts with DLAT, and is part of the multimeric pyruvate dehydrogenase complex that contains multiple copies of pyruvate dehydrogenase (E1), dihydrolipoamide acetyltransferase (DLAT, E2) and lipoamide dehydrogenase (DLD, E3). These subunits are bound to an inner core composed of about 48 DLAT and 12 PDHX molecules. Requires thiamine diphosphate as cofactor. It depends on Mg(2+) as a cofactor. Phosphorylation at Ser-232, Ser-293 and Ser-300 by PDK family kinases inactivates the enzyme; for this phosphorylation at a single site is sufficient. Phosphorylation at Ser-293 interferes with access to active site, and thereby inactivates the enzyme. Dephosphorylation at all three sites, i.e. at Ser-232, Ser-293 and Ser-300, is required for reactivation. In terms of processing, acetylation alters the phosphorylation pattern. Deacetylated by SIRT3.

The protein localises to the mitochondrion matrix. It catalyses the reaction N(6)-[(R)-lipoyl]-L-lysyl-[protein] + pyruvate + H(+) = N(6)-[(R)-S(8)-acetyldihydrolipoyl]-L-lysyl-[protein] + CO2. Its activity is regulated as follows. Pyruvate dehydrogenase activity is inhibited by phosphorylation of PDHA1; it is reactivated by dephosphorylation. In terms of biological role, the pyruvate dehydrogenase complex catalyzes the overall conversion of pyruvate to acetyl-CoA and CO(2), and thereby links the glycolytic pathway to the tricarboxylic cycle. The chain is Pyruvate dehydrogenase E1 component subunit alpha, somatic form, mitochondrial (PDHA1) from Pan troglodytes (Chimpanzee).